The sequence spans 82 residues: Sulfur carrier protein TusA (82 aa).

C17 (cysteine persulfide intermediate) is an active-site residue.

It belongs to the sulfur carrier protein TusA family.

The protein resides in the cytoplasm. In terms of biological role, sulfur carrier protein which probably makes part of a sulfur-relay system. This is Sulfur carrier protein TusA from Glaesserella parasuis serovar 5 (strain SH0165) (Haemophilus parasuis).